The chain runs to 1013 residues: MDIS1-interacting receptor like kinase 1 (1013 aa).

The N-terminal stretch at 1–23 (MKMKIIVLFLYYCYIGSTSSVLA) is a signal peptide. The Extracellular segment spans residues 24–633 (SIDNVNELSV…SSHSSLHGKR (610 aa)). N-linked (GlcNAc...) asparagine glycans are attached at residues Asn-61, Asn-82, Asn-101, Asn-137, Asn-146, Asn-151, and Asn-155. LRR repeat units lie at residues 70-94 (NGNV…ISQL), 95-117 (SSLV…SIPP), 119-137 (KSID…LFSN), 139-163 (SLGL…LGNL), 164-186 (VSLE…SFKN), 187-213 (LQKL…QLPS), 215-234 (ETAI…EFGN), 235-259 (INSL…LGKL), 260-283 (KSLE…IGSI), 284-307 (TTLK…ITKL), 308-331 (KNLQ…ISSL), 333-355 (QLQV…LGKN), 357-379 (PLQW…LCNK), 381-403 (NLTK…LSTC), 405-426 (SLVR…GFGK), 427-451 (LEKL…ISDS), 453-475 (SLSF…ILSI), 477-498 (NLQA…QFQD), 499-523 (CPSL…IASC), 525-547 (KLVS…ITTM), 548-571 (SALA…IGTS), and 573-595 (ALEL…GFLK). The N-linked (GlcNAc...) asparagine glycan is linked to Asn-199. Asn-271 carries an N-linked (GlcNAc...) asparagine glycan. Asn-341 carries N-linked (GlcNAc...) asparagine glycosylation. 3 N-linked (GlcNAc...) asparagine glycosylation sites follow: Asn-381, Asn-389, and Asn-417. N-linked (GlcNAc...) asparagine glycans are attached at residues Asn-535, Asn-557, and Asn-578. The helical transmembrane segment at 634–654 (IVAGWLIGIASVLALGILTIV) threads the bilayer. At 655–1013 (TRTLYKKWYS…FSTSPVNGLL (359 aa)) the chain is on the cytoplasmic side. Thr-691 bears the Phosphothreonine mark. Residues 699–983 (IKESNMIGMG…SMLGEAKPRR (285 aa)) enclose the Protein kinase domain. ATP is bound by residues 705 to 713 (IGMGATGIV) and Lys-728. Thr-710 bears the Phosphothreonine; by autocatalysis mark. 2 positions are modified to phosphothreonine; by autocatalysis: Thr-741 and Thr-742. Phosphotyrosine is present on residues Tyr-777 and Tyr-818. Catalysis depends on Asp-831, which acts as the Proton acceptor. Position 862 is a phosphothreonine; by autocatalysis (Thr-862). Ser-864 is subject to Phosphoserine; by autocatalysis. Tyr-872 carries the post-translational modification Phosphotyrosine. The residue at position 879 (Tyr-879) is a Phosphotyrosine; by autocatalysis. Thr-880 and Thr-992 each carry phosphothreonine; by autocatalysis. The disordered stretch occupies residues 976–1013 (LGEAKPRRKSNSNEENTSRSLAEKHSSVFSTSPVNGLL). Over residues 1002 to 1013 (SVFSTSPVNGLL) the composition is skewed to polar residues.

It belongs to the protein kinase superfamily. Ser/Thr protein kinase family. As to quaternary structure, homodimer. Interacts with MDIS1 and LURE1.2. Autophosphorylation induced by the interaction with LURE1.2. In terms of tissue distribution, expressed in pollen tubes.

It localises to the cell membrane. The catalysed reaction is L-seryl-[protein] + ATP = O-phospho-L-seryl-[protein] + ADP + H(+). It carries out the reaction L-threonyl-[protein] + ATP = O-phospho-L-threonyl-[protein] + ADP + H(+). Involved in the regulation of procambium maintenance and polarity during vascular-tissue development. Involved in the pollen tube perception of the female signal. Phosphorylates MDSI1. This Arabidopsis thaliana (Mouse-ear cress) protein is MDIS1-interacting receptor like kinase 1.